Consider the following 238-residue polypeptide: Sugar fermentation stimulation protein homolog (238 aa).

This sequence belongs to the SfsA family.

In Klebsiella pneumoniae subsp. pneumoniae (strain ATCC 700721 / MGH 78578), this protein is Sugar fermentation stimulation protein homolog.